The chain runs to 112 residues: Integration host factor subunit alpha (112 aa).

This sequence belongs to the bacterial histone-like protein family. In terms of assembly, heterodimer of an alpha and a beta chain.

This protein is one of the two subunits of integration host factor, a specific DNA-binding protein that functions in genetic recombination as well as in transcriptional and translational control. This Rhizobium rhizogenes (strain K84 / ATCC BAA-868) (Agrobacterium radiobacter) protein is Integration host factor subunit alpha.